Reading from the N-terminus, the 921-residue chain is DNA ligase (921 aa).

NAD(+) is bound by residues 90 to 94 (DAAYD), 139 to 140 (SL), and Glu-173. Lys-175 (N6-AMP-lysine intermediate) is an active-site residue. The NAD(+) site is built by Arg-196, Glu-235, Lys-360, and Lys-384. Zn(2+) is bound by residues Cys-481, Cys-484, Cys-500, and Cys-506. Residues 663 to 688 (EAAIESAETQGGAASETTGAPTGAEA) are disordered. The region spanning 839-921 (SLPQTLAGKT…AQLLETGSID (83 aa)) is the BRCT domain.

The protein belongs to the NAD-dependent DNA ligase family. LigA subfamily. Requires Mg(2+) as cofactor. Mn(2+) serves as cofactor.

It carries out the reaction NAD(+) + (deoxyribonucleotide)n-3'-hydroxyl + 5'-phospho-(deoxyribonucleotide)m = (deoxyribonucleotide)n+m + AMP + beta-nicotinamide D-nucleotide.. In terms of biological role, DNA ligase that catalyzes the formation of phosphodiester linkages between 5'-phosphoryl and 3'-hydroxyl groups in double-stranded DNA using NAD as a coenzyme and as the energy source for the reaction. It is essential for DNA replication and repair of damaged DNA. The sequence is that of DNA ligase from Bifidobacterium longum subsp. infantis (strain ATCC 15697 / DSM 20088 / JCM 1222 / NCTC 11817 / S12).